The primary structure comprises 113 residues: MHEVAIMTETVAIANAAAERQNATKIVGLTMRIGAISGVVPEALSFAFEAVAGGTLAEQAQLIIETVPVTCYCAQCDRPFTPPDLFYECPLCSSLSQHILSGKEVELKSLEVI.

H2 contacts Ni(2+). Residues C73, C76, C89, and C92 each coordinate Zn(2+).

Belongs to the HypA/HybF family.

In terms of biological role, involved in the maturation of [NiFe] hydrogenases. Required for nickel insertion into the metal center of the hydrogenase. The polypeptide is Hydrogenase maturation factor HypA (Picosynechococcus sp. (strain ATCC 27264 / PCC 7002 / PR-6) (Agmenellum quadruplicatum)).